Reading from the N-terminus, the 713-residue chain is Nucleolin (713 aa).

The segment at 1–309 is disordered; that stretch reads MVKLAKAGKT…QKIEGSEPTT (309 aa). N6-acetyllysine is present on residues lysine 9, lysine 15, and lysine 16. The segment covering 24–46 has biased composition (acidic residues); that stretch reads VEEDSEDEEMSEDEDDSSGEEEV. Phosphoserine is present on residues serine 28, serine 34, serine 40, and serine 41. The span at 56–111 shows a compositional bias: low complexity; it reads ATTTPAKKVVVSQTKKAAVPTPAKKAAVTPGKKAAATPAKKAVTPAKVVPTPGKKG. The stretch at 58–65 is repeat 1; it reads TTPAKKVV. Residues 58–135 form an 8 X 8 AA tandem repeats of X-T-P-X-K-K-X-X region; that stretch reads TTPAKKVVVS…GAVTPAKGAK (78 aa). Serine 67 carries the phosphoserine modification. Threonine 69, threonine 76, threonine 84, and threonine 92 each carry phosphothreonine. 3 repeat units span residues 75–82, 83–90, and 91–98. Residue lysine 96 is modified to N6-acetyllysine. Position 99 is a phosphothreonine (threonine 99). One copy of the 5; truncated repeat lies at 99–104; that stretch reads TPAKVV. Lysine 102 is subject to N6-acetyllysine. Repeat 6 spans residues 105–112; the sequence is PTPGKKGA. The residue at position 106 (threonine 106) is a Phosphothreonine. 2 positions are modified to N6-acetyllysine: lysine 109 and lysine 116. Repeat copies occupy residues 120 to 127 and 128 to 135. Phosphothreonine is present on threonine 121. At lysine 124 the chain carries N6-acetyllysine. Serine 145 and serine 157 each carry phosphoserine. The span at 145–168 shows a compositional bias: acidic residues; sequence SDEDEDEEDEDDSDEDEDEEDEFE. The span at 169–186 shows a compositional bias: low complexity; it reads PPVVKGVKPAKAAPAAPA. A phosphoserine mark is found at serine 187 and serine 213. Acidic residues predominate over residues 187–218; sequence SEDEDEEDDDDEDDDDDDEEEEEEDDSEEEVM. The residue at position 221 (threonine 221) is a Phosphothreonine. Positions 242-275 are enriched in acidic residues; it reads EEEEDDEDDEDEEEDEDEEDEEDDEDEDEEEEEE. Positions 288–304 are enriched in basic and acidic residues; it reads MTKQKEAPEAKKQKIEG. A Glycyl lysine isopeptide (Lys-Gly) (interchain with G-Cter in SUMO1); alternate cross-link involves residue lysine 301. A Glycyl lysine isopeptide (Lys-Gly) (interchain with G-Cter in SUMO2); alternate cross-link involves residue lysine 301. Serine 305 bears the Phosphoserine mark. RRM domains are found at residues 311 to 387 and 397 to 470; these read FNLF…KPKG and RTLL…YTGE. At lysine 322 the chain carries N6-acetyllysine. Residue lysine 328 forms a Glycyl lysine isopeptide (Lys-Gly) (interchain with G-Cter in SUMO1); alternate linkage. Lysine 328 is covalently cross-linked (Glycyl lysine isopeptide (Lys-Gly) (interchain with G-Cter in SUMO2); alternate). Lysine 352 is modified (N6-acetyllysine). At serine 360 the chain carries Phosphoserine. Position 371 is a phosphothreonine (threonine 371). Lysine 374 participates in a covalent cross-link: Glycyl lysine isopeptide (Lys-Gly) (interchain with G-Cter in SUMO2). Lysine 381 participates in a covalent cross-link: Glycyl lysine isopeptide (Lys-Gly) (interchain with G-Cter in SUMO2); alternate. Position 381 is an N6-acetyllysine; alternate (lysine 381). Lysine 402 is subject to N6-acetyllysine. At serine 405 the chain carries Phosphoserine. At threonine 409 the chain carries Phosphothreonine. Lysine 448 carries the N6-acetyllysine modification. Phosphoserine occurs at positions 462 and 464. An N6-acetyllysine mark is found at lysine 471 and lysine 480. The RRM 3 domain occupies 489 to 563; it reads KTLVLSNLSY…RTIRLELQGP (75 aa). A Glycyl lysine isopeptide (Lys-Gly) (interchain with G-Cter in SUMO2); alternate cross-link involves residue lysine 516. Lysine 516 carries the post-translational modification N6-acetyllysine; alternate. Lysine 524 bears the N6-acetyllysine mark. The residue at position 566 (serine 566) is a Phosphoserine. Lysine 575 carries the post-translational modification N6-acetyllysine. Residues 575–650 form the RRM 4 domain; the sequence is KTLFVKGLSE…NKVTLDWAKP (76 aa). Residue lysine 580 forms a Glycyl lysine isopeptide (Lys-Gly) (interchain with G-Cter in SUMO2); alternate linkage. Lysine 580 bears the N6-acetyllysine; alternate mark. Serine 583 carries the phosphoserine modification. A Glycyl lysine isopeptide (Lys-Gly) (interchain with G-Cter in SUMO1); alternate cross-link involves residue lysine 592. A Glycyl lysine isopeptide (Lys-Gly) (interchain with G-Cter in SUMO2); alternate cross-link involves residue lysine 592. 2 positions are modified to phosphoserine: serine 594 and serine 622. Lysine 627 is covalently cross-linked (Glycyl lysine isopeptide (Lys-Gly) (interchain with G-Cter in SUMO2)). A disordered region spans residues 645-713; sequence LDWAKPKGEG…KPQGKKTKFE (69 aa). Lysine 649 is modified (N6-acetyllysine). The segment covering 653–702 has biased composition (gly residues); sequence EGGFGGRGGGRGGFGGRGGGRGGRGGFGGRGRGGFGGRGGFRGGRGGGGD. Arginine 659, arginine 663, arginine 669, arginine 673, arginine 676, arginine 682, arginine 684, arginine 690, and arginine 694 each carry asymmetric dimethylarginine. Residue arginine 697 is modified to Asymmetric dimethylarginine; alternate. Arginine 697 is modified (omega-N-methylarginine; alternate).

As to quaternary structure, identified in a IGF2BP1-dependent mRNP granule complex containing untranslated mRNAs. Component of the SWAP complex that consists of NPM1, NCL/nucleolin, PARP1 and SWAP70. Component of a complex which is at least composed of HTATSF1/Tat-SF1, the P-TEFb complex components CDK9 and CCNT1, RNA polymerase II, SUPT5H, and NCL/nucleolin. Interacts with AICDA. Interacts with APTX. Interacts with C1QBP. Interacts with ERBB4. Interacts (via C-terminus) with FMR1 isoform 6 (via N-terminus). Interacts with GZF1; this interaction is important for nucleolar localization of GZF1. Interacts with NSUN2. Interacts with NVL. Interacts (via N-terminus domain) with SETX. Interacts (via RRM1 and C-terminal RRM4/Arg/Gly-rich domains) with TERT; the interaction is important for nucleolar localization of TERT. Interacts with WDR46. Interacts with ZFP36. Interacts with LRRC34. Interacts with RRP1B. Interacts with HNRNPU; this interaction occurs during mitosis. Interacts with RIOK1; RIOK1 recruits NCL to PRMT5 for symmetrically methylation. Interacts with ZBTB7B. Interacts with MDK; this interaction promotes NCL clustering and lateral movements of this complex into lipid rafts leading to MDK internalization. Interacts with HDGF. Interacts with ALKBH2. Interacts with IGFBP5; this interaction is necessary for IGFBP5 localization to the nucleus. Interacts with DDX24 (when ubiquitinated); this interaction may be important during ribosome biogenesis. Some glutamate residues are glycylated by TTLL8. This modification occurs exclusively on glutamate residues and results in a glycine chain on the gamma-carboxyl group. In terms of processing, symmetrically methylated by PRMT5.

The protein resides in the nucleus. Its subcellular location is the nucleolus. It localises to the cytoplasm. Functionally, nucleolin is the major nucleolar protein of growing eukaryotic cells. It is found associated with intranucleolar chromatin and pre-ribosomal particles. It induces chromatin decondensation by binding to histone H1. It is thought to play a role in pre-rRNA transcription and ribosome assembly. May play a role in the process of transcriptional elongation. Binds RNA oligonucleotides with 5'-UUAGGG-3' repeats more tightly than the telomeric single-stranded DNA 5'-TTAGGG-3' repeats. The sequence is that of Nucleolin (Ncl) from Rattus norvegicus (Rat).